A 330-amino-acid polypeptide reads, in one-letter code: Phosphatidylglycerol--prolipoprotein diacylglyceryl transferase (330 aa).

3 consecutive transmembrane segments (helical) span residues 22–42, 57–77, and 97–117; these read LPIRAYALLIILGIVAALVVG, YDIALWAVPFGLVGGRLYHLA, and IWDGGLGIWGAVALGCVGAWL. Residue R145 participates in a 1,2-diacyl-sn-glycero-3-phospho-(1'-sn-glycerol) binding. Helical transmembrane passes span 193–213 and 257–277; these read VVQPTFLYELIWNVLVFFALI and INSFTSTFVFIGAVVYIILAP.

Belongs to the Lgt family.

The protein resides in the cell membrane. It carries out the reaction L-cysteinyl-[prolipoprotein] + a 1,2-diacyl-sn-glycero-3-phospho-(1'-sn-glycerol) = an S-1,2-diacyl-sn-glyceryl-L-cysteinyl-[prolipoprotein] + sn-glycerol 1-phosphate + H(+). It participates in protein modification; lipoprotein biosynthesis (diacylglyceryl transfer). Functionally, catalyzes the transfer of the diacylglyceryl group from phosphatidylglycerol to the sulfhydryl group of the N-terminal cysteine of a prolipoprotein, the first step in the formation of mature lipoproteins. In Mycobacterium leprae (strain Br4923), this protein is Phosphatidylglycerol--prolipoprotein diacylglyceryl transferase.